Here is a 375-residue protein sequence, read N- to C-terminus: Protein RecA (375 aa).

75–82 (GPESSGKT) provides a ligand contact to ATP. Residues 339-375 (GPYAKMKDEQTEEAAGDQMDEDKPIDLSPNFDDDDAN) are disordered. Over residues 348–358 (QTEEAAGDQMD) the composition is skewed to acidic residues.

The protein belongs to the RecA family.

It localises to the cytoplasm. In terms of biological role, can catalyze the hydrolysis of ATP in the presence of single-stranded DNA, the ATP-dependent uptake of single-stranded DNA by duplex DNA, and the ATP-dependent hybridization of homologous single-stranded DNAs. It interacts with LexA causing its activation and leading to its autocatalytic cleavage. The protein is Protein RecA of Corynebacterium jeikeium (strain K411).